A 277-amino-acid polypeptide reads, in one-letter code: Pantothenate synthetase (277 aa).

28 to 35 serves as a coordination point for ATP; that stretch reads MGALHSGH. The active-site Proton donor is the His35. Position 59 (Gln59) interacts with (R)-pantoate. Residue Gln59 participates in beta-alanine binding. Residues 145–148, Val174, and 182–185 each bind ATP; these read GEKD and LSSR.

It belongs to the pantothenate synthetase family. Homodimer.

The protein localises to the cytoplasm. The enzyme catalyses (R)-pantoate + beta-alanine + ATP = (R)-pantothenate + AMP + diphosphate + H(+). The protein operates within cofactor biosynthesis; (R)-pantothenate biosynthesis; (R)-pantothenate from (R)-pantoate and beta-alanine: step 1/1. In terms of biological role, catalyzes the condensation of pantoate with beta-alanine in an ATP-dependent reaction via a pantoyl-adenylate intermediate. This chain is Pantothenate synthetase, found in Anaplasma marginale (strain St. Maries).